A 333-amino-acid polypeptide reads, in one-letter code: Biotin synthase (333 aa).

The Radical SAM core domain occupies 47–273 (YYGNKVKLNM…MNPTKEIRIA (227 aa)). Positions 65, 69, and 72 each coordinate [4Fe-4S] cluster. The [2Fe-2S] cluster site is built by Cys-109, Cys-141, Cys-201, and Arg-271.

This sequence belongs to the radical SAM superfamily. Biotin synthase family. As to quaternary structure, homodimer. It depends on [4Fe-4S] cluster as a cofactor. The cofactor is [2Fe-2S] cluster.

It catalyses the reaction (4R,5S)-dethiobiotin + (sulfur carrier)-SH + 2 reduced [2Fe-2S]-[ferredoxin] + 2 S-adenosyl-L-methionine = (sulfur carrier)-H + biotin + 2 5'-deoxyadenosine + 2 L-methionine + 2 oxidized [2Fe-2S]-[ferredoxin]. It functions in the pathway cofactor biosynthesis; biotin biosynthesis; biotin from 7,8-diaminononanoate: step 2/2. In terms of biological role, catalyzes the conversion of dethiobiotin (DTB) to biotin by the insertion of a sulfur atom into dethiobiotin via a radical-based mechanism. In Geobacillus kaustophilus (strain HTA426), this protein is Biotin synthase.